Here is a 300-residue protein sequence, read N- to C-terminus: 3-methyl-2-oxobutanoate hydroxymethyltransferase (300 aa).

Residues D75 and D118 each contribute to the Mg(2+) site. Residues 75–76, D118, and K147 each bind 3-methyl-2-oxobutanoate; that span reads DS. E149 contributes to the Mg(2+) binding site. E216 serves as the catalytic Proton acceptor.

It belongs to the PanB family. As to quaternary structure, homodecamer; pentamer of dimers. It depends on Mg(2+) as a cofactor.

Its subcellular location is the cytoplasm. It catalyses the reaction 3-methyl-2-oxobutanoate + (6R)-5,10-methylene-5,6,7,8-tetrahydrofolate + H2O = 2-dehydropantoate + (6S)-5,6,7,8-tetrahydrofolate. The protein operates within cofactor biosynthesis; (R)-pantothenate biosynthesis; (R)-pantoate from 3-methyl-2-oxobutanoate: step 1/2. Catalyzes the reversible reaction in which hydroxymethyl group from 5,10-methylenetetrahydrofolate is transferred onto alpha-ketoisovalerate to form ketopantoate. This chain is 3-methyl-2-oxobutanoate hydroxymethyltransferase, found in Verminephrobacter eiseniae (strain EF01-2).